We begin with the raw amino-acid sequence, 204 residues long: Peptidyl-tRNA hydrolase 2 (204 aa).

Tyrosine 37 provides a ligand contact to tRNA. Catalysis depends on histidine 42, which acts as the Proton acceptor. TRNA-binding residues include phenylalanine 86, asparagine 88, and asparagine 134.

It belongs to the PTH family. As to quaternary structure, monomer.

Its subcellular location is the cytoplasm. It catalyses the reaction an N-acyl-L-alpha-aminoacyl-tRNA + H2O = an N-acyl-L-amino acid + a tRNA + H(+). Functionally, hydrolyzes ribosome-free peptidyl-tRNAs (with 1 or more amino acids incorporated), which drop off the ribosome during protein synthesis, or as a result of ribosome stalling. Catalyzes the release of premature peptidyl moieties from peptidyl-tRNA molecules trapped in stalled 50S ribosomal subunits, and thus maintains levels of free tRNAs and 50S ribosomes. The protein is Peptidyl-tRNA hydrolase 2 of Corynebacterium glutamicum (strain ATCC 13032 / DSM 20300 / JCM 1318 / BCRC 11384 / CCUG 27702 / LMG 3730 / NBRC 12168 / NCIMB 10025 / NRRL B-2784 / 534).